We begin with the raw amino-acid sequence, 184 residues long: Peptide deformylase (184 aa).

Positions 98 and 140 each coordinate Fe cation. The active site involves glutamate 141. Residue histidine 144 coordinates Fe cation.

It belongs to the polypeptide deformylase family. Fe(2+) serves as cofactor.

The catalysed reaction is N-terminal N-formyl-L-methionyl-[peptide] + H2O = N-terminal L-methionyl-[peptide] + formate. Removes the formyl group from the N-terminal Met of newly synthesized proteins. Requires at least a dipeptide for an efficient rate of reaction. N-terminal L-methionine is a prerequisite for activity but the enzyme has broad specificity at other positions. The chain is Peptide deformylase from Bacteroides fragilis (strain ATCC 25285 / DSM 2151 / CCUG 4856 / JCM 11019 / LMG 10263 / NCTC 9343 / Onslow / VPI 2553 / EN-2).